The chain runs to 412 residues: Protein BTN1 (412 aa).

Residues 1–29 (MDRRKLIFGKFWLFGLLNNVLYVVILAAA) form the signal peptide. 9 helical membrane-spanning segments follow: residues 41-61 (LILL…PFFI), 70-90 (IWSL…GRLG), 91-111 (VCIV…ITFL), 131-151 (GAGL…KIPV), 154-174 (SLLL…LQVE), 234-254 (VLVV…YLIN), 281-300 (IYVA…RSSG), 307-329 (GLYL…SWYY), and 334-356 (VWVI…VNSF).

The protein belongs to the battenin family.

The protein resides in the vacuole membrane. Involved in vacuolar transport and vacuole pH homeostasis. Also required for cytokinesis. The sequence is that of Protein BTN1 (BTN1) from Eremothecium gossypii (strain ATCC 10895 / CBS 109.51 / FGSC 9923 / NRRL Y-1056) (Yeast).